Here is a 366-residue protein sequence, read N- to C-terminus: Inactive PGL/p-HBAD biosynthesis glycosyltransferase Mb2982c (366 aa).

Disordered stretches follow at residues 1–23 (MEETSVAGDPGPDAGTSTAPNAA) and 295–366 (DGDR…HGGP). Basic and acidic residues predominate over residues 295–311 (DGDRGHRWPEPPEERAG).

Belongs to the UDP-glycosyltransferase family.

This Mycobacterium bovis (strain ATCC BAA-935 / AF2122/97) protein is Inactive PGL/p-HBAD biosynthesis glycosyltransferase Mb2982c.